A 462-amino-acid polypeptide reads, in one-letter code: GTPase Der (462 aa).

EngA-type G domains lie at 9 to 171 (KTIA…NLNQ) and 201 to 372 (IQVG…ECFS). GTP is bound by residues 15 to 22 (GQPNVGKS), 62 to 66 (DTGGM), 123 to 126 (NKID), 207 to 214 (GRVNVGKS), 254 to 258 (DTAGI), and 318 to 321 (NKWD). The region spanning 373–457 (KRIPTSLLNS…PLILNAKDKK (85 aa)) is the KH-like domain.

The protein belongs to the TRAFAC class TrmE-Era-EngA-EngB-Septin-like GTPase superfamily. EngA (Der) GTPase family. Associates with the 50S ribosomal subunit.

Functionally, GTPase that plays an essential role in the late steps of ribosome biogenesis. This chain is GTPase Der, found in Helicobacter pylori (strain P12).